A 176-amino-acid polypeptide reads, in one-letter code: Ribosome maturation factor RimM (176 aa).

A PRC barrel domain is found at E97–F176.

This sequence belongs to the RimM family. In terms of assembly, binds ribosomal protein uS19.

The protein resides in the cytoplasm. An accessory protein needed during the final step in the assembly of 30S ribosomal subunit, possibly for assembly of the head region. Essential for efficient processing of 16S rRNA. May be needed both before and after RbfA during the maturation of 16S rRNA. It has affinity for free ribosomal 30S subunits but not for 70S ribosomes. The polypeptide is Ribosome maturation factor RimM (Shewanella amazonensis (strain ATCC BAA-1098 / SB2B)).